The chain runs to 507 residues: MVTIRADEISNIIRERIEQYNREVKIVNTGTVLQVGDGIARIYGLDEVMAGELVEFEEGTIGIALNLESNNVGVVLMGDGLMIQEGSSVKATGRIAQIPVSEAYLGRVINALAKPIDGRGEIYASESRLIESPAPGIISRRSVYEPLQTGLIAIDSMIPIGRGQRELIIGDRQTGKTAVATDTILNQQGQNVICVYVAIGQKASSVAQVVNTLQERGAMEYTIVVAETADSPATLQYLAPYTGAALAEYFMFRERHTLIIYDDLSKQAQAYRQMSLLLRRPPGREAYPGDVFYLHSRLLERAAKLSSLLGEGSMTALPIVETQSGDVSAYIPTNVISITDGQIFLSADLFNAGIRPAINVGISVSRVGSAAQIKAMKQVAGKLKLELAQFAELEAFAQFASDLDKATQNQLARGQRLRELLKQSQAAPLTVEEQIMTIYTGTNGYLDSLEIGQVRKFLVELRTYVKTNKPQFQEIISSTKTFTEEAEALLKEAIQEQKERFLLQEQG.

170–177 is an ATP binding site; sequence GDRQTGKT.

It belongs to the ATPase alpha/beta chains family. In terms of assembly, F-type ATPases have 2 components, CF(1) - the catalytic core - and CF(0) - the membrane proton channel. CF(1) has five subunits: alpha(3), beta(3), gamma(1), delta(1), epsilon(1). CF(0) has four main subunits: a, b, b' and c.

It is found in the plastid. Its subcellular location is the chloroplast thylakoid membrane. The catalysed reaction is ATP + H2O + 4 H(+)(in) = ADP + phosphate + 5 H(+)(out). Produces ATP from ADP in the presence of a proton gradient across the membrane. The alpha chain is a regulatory subunit. This Eucalyptus globulus subsp. globulus (Tasmanian blue gum) protein is ATP synthase subunit alpha, chloroplastic.